The sequence spans 276 residues: uncharacterized protein (276 aa).

The interval 1-20 is disordered; that stretch reads MMSDEQHQGGDGQTTTNTNT.

This is an uncharacterized protein from Dictyostelium discoideum (Social amoeba).